We begin with the raw amino-acid sequence, 330 residues long: Ribosomal RNA small subunit methyltransferase A (330 aa).

Residues H29, L31, G56, E77, and D98 each contribute to the S-adenosyl-L-methionine site. The tract at residues 115-158 is disordered; sequence PVRSAGLPQAETAPKGLEPAGSSSQQGPRDWLRQTAGAAAPSRG. N177 provides a ligand contact to S-adenosyl-L-methionine.

This sequence belongs to the class I-like SAM-binding methyltransferase superfamily. rRNA adenine N(6)-methyltransferase family. RsmA subfamily.

It is found in the cytoplasm. It catalyses the reaction adenosine(1518)/adenosine(1519) in 16S rRNA + 4 S-adenosyl-L-methionine = N(6)-dimethyladenosine(1518)/N(6)-dimethyladenosine(1519) in 16S rRNA + 4 S-adenosyl-L-homocysteine + 4 H(+). Its function is as follows. Specifically dimethylates two adjacent adenosines (A1518 and A1519) in the loop of a conserved hairpin near the 3'-end of 16S rRNA in the 30S particle. May play a critical role in biogenesis of 30S subunits. In Polaromonas sp. (strain JS666 / ATCC BAA-500), this protein is Ribosomal RNA small subunit methyltransferase A.